Consider the following 632-residue polypeptide: Probable potassium transport system protein Kup (632 aa).

A run of 12 helical transmembrane segments spans residues 19–39 (LVVG…LYSL), 59–79 (IISM…VMFV), 110–130 (LIMM…VITP), 146–166 (PGLS…LFFI), 178–198 (FGPI…IHLV), 221–241 (LQAF…EALY), 256–276 (WFVL…AMLL), 298–318 (MVLL…SGAF), 346–366 (IYMP…VLAF), 375–395 (AYGI…ALVM), 403–423 (PALV…FFAA), and 428–448 (IAEG…LLMT).

This sequence belongs to the HAK/KUP transporter (TC 2.A.72) family.

The protein resides in the cell inner membrane. The enzyme catalyses K(+)(in) + H(+)(in) = K(+)(out) + H(+)(out). Functionally, transport of potassium into the cell. Likely operates as a K(+):H(+) symporter. The polypeptide is Probable potassium transport system protein Kup (Cupriavidus metallidurans (strain ATCC 43123 / DSM 2839 / NBRC 102507 / CH34) (Ralstonia metallidurans)).